A 220-amino-acid chain; its full sequence is Glutathione S-transferase (220 aa).

The 77-residue stretch at 1–77 (MLKLHGFSVS…YIEQTQSGKA (77 aa)) folds into the GST N-terminal domain. Residues Tyr12, Val49, and 61 to 62 (ET) contribute to the glutathione site. A GST C-terminal domain is found at 82–211 (DPFEQAKVRE…ADKEASMPAF (130 aa)).

The protein belongs to the GST superfamily. In terms of assembly, monomer and homodimer.

It is found in the cytoplasm. It carries out the reaction RX + glutathione = an S-substituted glutathione + a halide anion + H(+). Functionally, conjugation of reduced glutathione to a wide number of exogenous and endogenous hydrophobic electrophiles. The sequence is that of Glutathione S-transferase from Pseudomonas putida (strain ATCC 700007 / DSM 6899 / JCM 31910 / BCRC 17059 / LMG 24140 / F1).